The sequence spans 406 residues: MAAPGARRPLLLLLLAGLAHGASALFEVKNNGTTCIMASFSASFLTTYETANGSQIVNISLPASAEVLKNGSSCGKENVSDPSLTITFGRGYLLTLNFTKNTTRYSVQHMYFTYNLSDTEHFPNAISKEIYTMDSTTDIKADINKAYRCVSDIRVYMKNVTVVLRDATIQAYLSSGNFSKEETHCTQDGPSPTTGPPSPSPPLVPTNPTVSKYNVTGNNGTCLLASMALQLNITYLKKDNKTVTRAFNISPNDTSSGSCGINLVTLKVENKNRALELQFGMNASSSLFFLQGVRLNMTLPDALVPTFSISNHSLKALQATVGNSYKCNTEEHIFVSKMLSLNVFSVQVQAFKVDSDRFGSVEECVQDGNNMLIPIAVGGALAGLVLIVLIAYLIGRKRSHAGYQTI.

An N-terminal signal peptide occupies residues M1–A24. The first lumenal domain stretch occupies residues L25–D188. At L25 to N370 the chain is on the lumenal side. N-linked (GlcNAc...) asparagine glycans are attached at residues N31, N52, N58, N70, N78, N97, N101, N115, N159, and N177. A disulfide bridge links C35 with C74. The cysteines at positions 149 and 185 are disulfide-linked. Residues K180 to N207 are disordered. The hinge stretch occupies residues G189–N218. The span at T193–P205 shows a compositional bias: pro residues. 4 N-linked (GlcNAc...) asparagine glycosylation sites follow: N214, N219, N232, and N240. The interval N219–N370 is second lumenal domain. A disulfide bond links C222 and C259. N252 carries an N-linked (GlcNAc...) (high mannose) asparagine glycan. N-linked (GlcNAc...) asparagine glycosylation is found at N282, N296, and N311. Cysteines 327 and 364 form a disulfide. The chain crosses the membrane as a helical span at residues M371 to I394. The Cytoplasmic portion of the chain corresponds to G395 to I406.

The protein belongs to the LAMP family. In terms of assembly, interacts with ABCB9; this interaction strongly stabilizes ABCB9 and protects ABCB9 against lysosomal degradation. Interacts with FURIN. Interacts with TMEM175; inhibiting the proton channel activity of TMEM175. Post-translationally, O- and N-glycosylated; some of the N-glycans attached to LAMP-1 are polylactosaminoglycans.

The protein resides in the lysosome membrane. Its subcellular location is the endosome membrane. It is found in the late endosome membrane. The protein localises to the cell membrane. It localises to the cytolytic granule membrane. Its function is as follows. Lysosomal membrane glycoprotein which plays an important role in lysosome biogenesis, lysosomal pH regulation, autophagy and cholesterol homeostasis. Acts as an important regulator of lysosomal lumen pH regulation by acting as a direct inhibitor of the proton channel TMEM175, facilitating lysosomal acidification for optimal hydrolase activity. Also plays an important role in NK-cells cytotoxicity. Mechanistically, participates in cytotoxic granule movement to the cell surface and perforin trafficking to the lytic granule. In addition, protects NK-cells from degranulation-associated damage induced by their own cytotoxic granule content. Presents carbohydrate ligands to selectins. Also implicated in tumor cell metastasis. This chain is Lysosome-associated membrane glycoprotein 1 (Lamp1), found in Mus musculus (Mouse).